The primary structure comprises 214 residues: Octanoyltransferase (214 aa).

The BPL/LPL catalytic domain occupies Ser29–Ser214. Residues Arg69–His76, Ala146–Gly148, and Gly159–Ala161 contribute to the substrate site. Cys177 (acyl-thioester intermediate) is an active-site residue.

The protein belongs to the LipB family.

It localises to the cytoplasm. The catalysed reaction is octanoyl-[ACP] + L-lysyl-[protein] = N(6)-octanoyl-L-lysyl-[protein] + holo-[ACP] + H(+). The protein operates within protein modification; protein lipoylation via endogenous pathway; protein N(6)-(lipoyl)lysine from octanoyl-[acyl-carrier-protein]: step 1/2. Catalyzes the transfer of endogenously produced octanoic acid from octanoyl-acyl-carrier-protein onto the lipoyl domains of lipoate-dependent enzymes. Lipoyl-ACP can also act as a substrate although octanoyl-ACP is likely to be the physiological substrate. This is Octanoyltransferase from Polynucleobacter necessarius subsp. necessarius (strain STIR1).